Consider the following 242-residue polypeptide: 7-cyano-7-deazaguanine synthase (242 aa).

12-22 (FSGGQDSATCL) lines the ATP pocket. Zn(2+) contacts are provided by Cys-200, Cys-215, Cys-218, and Cys-221.

The protein belongs to the QueC family. Zn(2+) is required as a cofactor.

It catalyses the reaction 7-carboxy-7-deazaguanine + NH4(+) + ATP = 7-cyano-7-deazaguanine + ADP + phosphate + H2O + H(+). It functions in the pathway purine metabolism; 7-cyano-7-deazaguanine biosynthesis. Its function is as follows. Catalyzes the ATP-dependent conversion of 7-carboxy-7-deazaguanine (CDG) to 7-cyano-7-deazaguanine (preQ(0)). This is 7-cyano-7-deazaguanine synthase from Gluconobacter oxydans (strain 621H) (Gluconobacter suboxydans).